Reading from the N-terminus, the 464-residue chain is L-cysteine:1D-myo-inositol 2-amino-2-deoxy-alpha-D-glucopyranoside ligase (464 aa).

Zn(2+) is bound at residue Cys-67. Residues 67 to 70 (CGIT), Thr-82, and 105 to 107 (NVT) each bind L-cysteinyl-5'-AMP. Residues 69–79 (ITPYDATHLGH) carry the 'HIGH' region motif. The 'ERGGDP' region motif lies at 207-212 (ERGGDP). An L-cysteinyl-5'-AMP-binding site is contributed by Trp-247. Cys-251 serves as a coordination point for Zn(2+). Residue 269–271 (GTD) participates in L-cysteinyl-5'-AMP binding. Residue His-276 participates in Zn(2+) binding. Val-303 contacts L-cysteinyl-5'-AMP. Positions 309 to 313 (KMSKS) match the 'KMSKS' region motif. A disordered region spans residues 410–435 (AGGSAGAGPDPTHQGGPVRGSGGDVP).

Belongs to the class-I aminoacyl-tRNA synthetase family. MshC subfamily. As to quaternary structure, monomer. Zn(2+) is required as a cofactor.

It carries out the reaction 1D-myo-inositol 2-amino-2-deoxy-alpha-D-glucopyranoside + L-cysteine + ATP = 1D-myo-inositol 2-(L-cysteinylamino)-2-deoxy-alpha-D-glucopyranoside + AMP + diphosphate + H(+). Its function is as follows. Catalyzes the ATP-dependent condensation of GlcN-Ins and L-cysteine to form L-Cys-GlcN-Ins. The sequence is that of L-cysteine:1D-myo-inositol 2-amino-2-deoxy-alpha-D-glucopyranoside ligase from Frankia casuarinae (strain DSM 45818 / CECT 9043 / HFP020203 / CcI3).